The following is a 140-amino-acid chain: ATP synthase epsilon chain (140 aa).

It belongs to the ATPase epsilon chain family. In terms of assembly, F-type ATPases have 2 components, CF(1) - the catalytic core - and CF(0) - the membrane proton channel. CF(1) has five subunits: alpha(3), beta(3), gamma(1), delta(1), epsilon(1). CF(0) has three main subunits: a, b and c.

The protein localises to the cell inner membrane. Its function is as follows. Produces ATP from ADP in the presence of a proton gradient across the membrane. In Vibrio parahaemolyticus serotype O3:K6 (strain RIMD 2210633), this protein is ATP synthase epsilon chain.